Reading from the N-terminus, the 316-residue chain is Transcription termination/antitermination protein NusG (316 aa).

This sequence belongs to the NusG family.

Functionally, participates in transcription elongation, termination and antitermination. The protein is Transcription termination/antitermination protein NusG of Mycoplasma genitalium (strain ATCC 33530 / DSM 19775 / NCTC 10195 / G37) (Mycoplasmoides genitalium).